The primary structure comprises 334 residues: Aspartate carbamoyltransferase catalytic subunit (334 aa).

Residues Arg71 and Thr72 each contribute to the carbamoyl phosphate site. Residue Lys99 participates in L-aspartate binding. 3 residues coordinate carbamoyl phosphate: Arg121, His151, and Gln154. L-aspartate is bound by residues Arg184 and Arg239. Residues Gly280 and Pro281 each contribute to the carbamoyl phosphate site.

This sequence belongs to the aspartate/ornithine carbamoyltransferase superfamily. ATCase family. Heterododecamer (2C3:3R2) of six catalytic PyrB chains organized as two trimers (C3), and six regulatory PyrI chains organized as three dimers (R2).

It catalyses the reaction carbamoyl phosphate + L-aspartate = N-carbamoyl-L-aspartate + phosphate + H(+). It participates in pyrimidine metabolism; UMP biosynthesis via de novo pathway; (S)-dihydroorotate from bicarbonate: step 2/3. In terms of biological role, catalyzes the condensation of carbamoyl phosphate and aspartate to form carbamoyl aspartate and inorganic phosphate, the committed step in the de novo pyrimidine nucleotide biosynthesis pathway. The polypeptide is Aspartate carbamoyltransferase catalytic subunit (Pseudomonas fluorescens biotype A).